The following is a 237-amino-acid chain: Putative ATP-binding protein BMEII0108 (237 aa).

Residues 5–205 (ISFNNVVMRY…DLPYPRTEAI (201 aa)) form the ABC transporter domain. 37–44 (GPSGCGKS) lines the ATP pocket.

It belongs to the ABC transporter superfamily. As to quaternary structure, the complex is composed of two ATP-binding proteins (BMEII0108), two transmembrane proteins (BMEII0107) and a solute-binding protein (BMEII0109).

The protein localises to the cell inner membrane. Functionally, probably part of an ABC transporter complex. Probably Responsible for energy coupling to the transport system. The polypeptide is Putative ATP-binding protein BMEII0108 (Brucella melitensis biotype 1 (strain ATCC 23456 / CCUG 17765 / NCTC 10094 / 16M)).